The following is a 116-amino-acid chain: Large ribosomal subunit protein bL17 (116 aa).

It belongs to the bacterial ribosomal protein bL17 family. Part of the 50S ribosomal subunit. Contacts protein L32.

The polypeptide is Large ribosomal subunit protein bL17 (Gloeothece citriformis (strain PCC 7424) (Cyanothece sp. (strain PCC 7424))).